We begin with the raw amino-acid sequence, 406 residues long: Tryptophan 2,3-dioxygenase (406 aa).

Substrate is bound by residues 72 to 76 (FIITH) and arginine 144. Heme is bound at residue histidine 328. Threonine 342 contributes to the substrate binding site.

It belongs to the tryptophan 2,3-dioxygenase family. As to quaternary structure, homotetramer. Dimer of dimers. It depends on heme as a cofactor.

It carries out the reaction L-tryptophan + O2 = N-formyl-L-kynurenine. It participates in amino-acid degradation; L-tryptophan degradation via kynurenine pathway; L-kynurenine from L-tryptophan: step 1/2. Heme-dependent dioxygenase that catalyzes the oxidative cleavage of the L-tryptophan (L-Trp) pyrrole ring and converts L-tryptophan to N-formyl-L-kynurenine. Catalyzes the oxidative cleavage of the indole moiety. The chain is Tryptophan 2,3-dioxygenase from Homo sapiens (Human).